The chain runs to 2300 residues: MMLQLLLFCLALFIFVYWVLPTGISWYLVKRFRVKVRIGRISLPYLSLKNVHISKSGFSVQIEEVCLRSSFFTTEVTKLLSIYIRDIRINKDIHSRQDDSYDQDSYELRRTQTLAGKASEAKGVPDFRQTKVPASIITFAQFMAVHVNNISVVLMNNDFDPGWFIHATAKELHLDGSIVQNARVLLVNAALSEAQAKMLRHCSSRRQSLENLNKIRPCLGEVSFDMTLDASLFAQGPLSMDTLSLVINNAKSVIHGGLYEFLSEAKRRTSTGQPSRRSTQGLAPSKRSYDNDNYEKLAPIIPKNFNFSIKAATFSAVKENSQNDFSAKLQSFQISGKFNSKVTDEKTLLPSMLAKLGFHHLDIDTKYEKLLFVEQFTIDSVLEKDIFNLYVKLKTFQIIYNHSEIYDFVNNNFLARQRSSEAQPMQLIHKQKSLPDHLDLDTAVQSNLRANQRREGGVLEWIMQRIVVKGCAELFNVSLLMKLEDEHIAMSVSHTRFLLEQIEEKRSNLYENKFLNLLLNQRQWSMELMVETLWSNLGNSINDTNNLKKTHSPGSPFFLGVSLVKLCSYANTTKLDISVHTFRTEYSMQLAEFVVKSMECLRQYRGIKPKNMSGQSHARPNAGLTLSVQPSQSSTSLRVSVKVKDITAYFVNHHNVYSLLSFSELNLSRSQSLTTLKLEEFQMAIMRSMTASSLCLTDFSDVFATCKMIRLEHEQVEGTMGKLSIYIPGNMEATWNSNLHMHLLTLVRDMQDLKTELAIPASSVKKTTPKEGFIVELSAERSTIFEIKFSDRHSIQIFVESLFFSQKERCIIYAENVFVKIDDQHIFTVKELDLQSVPRLEVLTQERQNFPGFQLPSNKVWVTTIGSFKAIFPYDHDFYNAVNGECTSHFKWLKMVHNYKKKPFTVDSPLPCDLVIKIKEFLLEISDDPFEVKLRDNYVLLVDEYLESLKRKALFDKKIGELCSERLLLPSGTIEGLYANLVKKNSEIYIQRSKKIRESGPVRTRLLAWIMTDVNIMAMADTSIHGYNNVTRIMREIDHESPWPEEGLEFSTLWCRGVNISCTEWKFMLRDFPQPMFCVKSMRLYGNLCGAEQMGSKRAKRDVFIDVGEPFGTDVIQRSMPSLKFYHDFDCELESCSYAFGACWEPVMAQCNLSFEKISAPSKDPSPPLPFWDKLRLLLHGRLTLIAKQFTILLHASLDPYNTTEEMELTWNNCGIVLTNAKIMFKGELNVTVRTASRYDDCRLLHFPNLKLTIKLKWVCLANPNDHHAVMPCAPDKLPEYSSNQVHDSFRAFRSLNLNIWISFETKPKAGEDLEVDIPSLVLYGSTLRWFESLQLILSGVTRPTRRGPVFNNVRPRKKPLSRHYKKANLQMCLHKFQVLYWMSHALQKGFQLNGRRVSFSSEHSLTLNPIDDGLIHRPRADWSTIYMNCELNDAEIWLKSILTEKMDSSSENLASAADAFKIVRFYFLSVAKVSYGREALIPTTATSTEEDVKAQSTTPTHKLVVYDLKGAWTKSNRDVAFALFDSFMKSQKLKNNLSTEAVKSYRKEGPNSAVLKHKRSDSTITLSSTNNEVLPISNPNASMKKAPAQIHATAMLQQLIAEADHKFNVYSDDHSTQSRELQLQGLQACSAQDIIHENWSISLVNSQVLLKGCETSGYVIISAAKAEILQREHRPVWRERSLISKTTWKGLLECMQYYATVSAGDNNSLLEKEIMWLTVDNIQDKDETVINNLPDISHLVGSGRSVGGVVSETVGAFLSDNSGGAQPVQLQRIVSKCKCEFFYVSYGDAIDPNSITEVPPPPSEELQSPWEKQDDPVDAFTLMHHDLDVCTNSLQYAMILDIVNNLLLYVEPQRKQAAEKLTRMRFQLQLHSTEDQKRPIQQKQTVIRSLLMKIRSLEKDTHMISKERIEDGDSLELRQEYDHVQQMIRESKEELNTFSEDLDMMLLCYKETQLSQLSKISNVRSDESVTMVRTNEICFKRAQWRLTETDGQIGIADLVLSAFLYTKKSKSDDSVEHLLELGNIRMENLLPREIYRDVLLATEIQKDMPVDTHKRVLRIFCREKAPVGGISVKEHFEINVAPITIAITKKFYSTMLKFCFPDRDASETEVSDELDDNASTSSASTTNLQAKSSTSSSTKRSGKGKKGAKDSEFYVKIEKDDVEKMKERAEKNKLFIYIKIPEVPVRVSYKGNKEKNLEDITDYSLVIPTLEYHNVTWTWLDLLLAMKSVSRRVIFSQAIKQKLHIHQRQPILSAGERATPQEAEDKAVMLFGNRLLNENRNQKKGVFKFASSGKRSGND.

An N-terminal signal peptide occupies residues Met1–Pro21. Residues Gly23–Lys117 form a transmembrane domain region. Disordered stretches follow at residues Thr269–Asp290 and Val2111–Gly2148. Residues Ser270–Leu282 show a composition bias toward polar residues. The interval Val1750–Asp2300 is required for endoplasmic reticulum-cell membrane contact sites location and binding to phosphatidylinositols. The span at Ala2119–Lys2140 shows a compositional bias: low complexity.

It localises to the cell membrane. The protein resides in the endoplasmic reticulum membrane. Its subcellular location is the mitochondrion membrane. Its function is as follows. Tube-forming lipid transport protein which binds to phosphatidylinositols and affects phosphatidylinositol-4,5-bisphosphate (PtdIns-4,5-P2) distribution. In Drosophila melanogaster (Fruit fly), this protein is Protein hobbit.